The primary structure comprises 63 residues: Bowman-birk type proteinase inhibitor 2 (63 aa).

7 disulfides stabilise this stretch: Cys-7/Cys-61, Cys-8/Cys-23, Cys-11/Cys-57, Cys-13/Cys-21, Cys-31/Cys-38, Cys-35/Cys-50, and Cys-40/Cys-48.

This sequence belongs to the Bowman-Birk serine protease inhibitor family. In terms of assembly, exists as a dimer in its native form.

Inhibits trypsin, chymotrypsin, plasmin and factor XIIa. Does not inhibit factor Xa, thrombin, human plasma kallikrein, porcine pancreatic kallikrein and human urinary kallikrein. This chain is Bowman-birk type proteinase inhibitor 2, found in Amburana cearensis (Cerejeira).